Consider the following 605-residue polypeptide: MLRQYKEQIKSSPQSCGVYKMIGDKSKVLYIGKAKNLKSRLSDYLQFENLSERIRVMISQVIKVEIFITENEIEALLLEAQLIKSLKPSYNILLRDGKSYPYITISKHDYPRIAKYRGKFKKNEFHYYGPFPSAAAVKNTILSLQKAFLLRVCSDQYFSSTKRPCLEYQVKRCSAPCVDKITKDDYCKSVKQAQDTLLGRNKEVQRQLFSTMEKCSREMNYELAAVYRDRLKFLQQIQMQPMDFSFEEDADFFSVVREADLACIGVLSFRDKGNYGSIPYFIENCSDHSNDEILSTFLVNLYNPVNTPPAQIYVPDFIKDKEIIEQALYALTQKSIKVLHAKNSKERDLLNFIYNNSQHSLEQKLTDYRNNLEKLEELRKIFSLPNIPKRIEVYDNSHISGNQQVGVMIVAGQEGFLKSEYKKFTIKEEISGDDYKMMREVLTRRFSGNIKDIIPDFLLIDGGPGHVSIVQNVLEILNIKVPFACMAKGHDRNAGNERFYVPDREEFTLASDSKVMLYLQLLRNEAHRFAITSHRKKRDKQFFASQLSEISGVGSKRKKALMSHFGSVENISKASLAEIQNVPGISKGLAEIILQHVNSKKGTPK.

The GIY-YIG domain occupies 14 to 92; that stretch reads QSCGVYKMIG…IKSLKPSYNI (79 aa). The 36-residue stretch at 202–237 folds into the UVR domain; the sequence is KEVQRQLFSTMEKCSREMNYELAAVYRDRLKFLQQI.

It belongs to the UvrC family. Interacts with UvrB in an incision complex.

It is found in the cytoplasm. Its function is as follows. The UvrABC repair system catalyzes the recognition and processing of DNA lesions. UvrC both incises the 5' and 3' sides of the lesion. The N-terminal half is responsible for the 3' incision and the C-terminal half is responsible for the 5' incision. This is UvrABC system protein C from Wolbachia pipientis subsp. Culex pipiens (strain wPip).